Consider the following 199-residue polypeptide: NAD(P)H dehydrogenase (quinone) (199 aa).

Residues 4 to 190 (VLVLYYSAYG…AGARYQGRQI (187 aa)) form the Flavodoxin-like domain. FMN contacts are provided by residues 10–15 (SAYGHI) and 78–80 (TRF). Y12 is a binding site for NAD(+). Residue W98 coordinates substrate. FMN contacts are provided by residues 113–119 (SSATQHG) and H134.

It belongs to the WrbA family. FMN is required as a cofactor.

The catalysed reaction is a quinone + NADH + H(+) = a quinol + NAD(+). It catalyses the reaction a quinone + NADPH + H(+) = a quinol + NADP(+). This Bradyrhizobium diazoefficiens (strain JCM 10833 / BCRC 13528 / IAM 13628 / NBRC 14792 / USDA 110) protein is NAD(P)H dehydrogenase (quinone).